A 154-amino-acid chain; its full sequence is Transcriptional repressor NrdR (154 aa).

A zinc finger lies at 3 to 34; that stretch reads CPYCQSEDTQVKDSRPAEDGAAIRRRRACPVC. The ATP-cone domain maps to 49–139; the sequence is LVVVKRTGRK…VYRNFREAKD (91 aa).

The protein belongs to the NrdR family. Zn(2+) is required as a cofactor.

Its function is as follows. Negatively regulates transcription of bacterial ribonucleotide reductase nrd genes and operons by binding to NrdR-boxes. The polypeptide is Transcriptional repressor NrdR (Chelativorans sp. (strain BNC1)).